We begin with the raw amino-acid sequence, 214 residues long: Adenylate kinase (214 aa).

Residue 10-15 participates in ATP binding; sequence GSGKGT. The segment at 30 to 59 is NMP; the sequence is STGDMLRAAVREGTPLGMEAKKIMDAGQLV. Residues T31, R36, 57-59, 85-88, and Q92 contribute to the AMP site; these read QLV and GFPR. An LID region spans residues 122-159; sequence GRRVHPASGRTYHVVFNPPKVEGRDDETGEPLVQREDD. ATP-binding positions include R123 and 132 to 133; that span reads TY. AMP contacts are provided by R156 and R167. G200 is a binding site for ATP.

This sequence belongs to the adenylate kinase family. In terms of assembly, monomer.

It is found in the cytoplasm. The catalysed reaction is AMP + ATP = 2 ADP. The protein operates within purine metabolism; AMP biosynthesis via salvage pathway; AMP from ADP: step 1/1. Functionally, catalyzes the reversible transfer of the terminal phosphate group between ATP and AMP. Plays an important role in cellular energy homeostasis and in adenine nucleotide metabolism. The protein is Adenylate kinase of Methylococcus capsulatus (strain ATCC 33009 / NCIMB 11132 / Bath).